The sequence spans 70 residues: Conotoxin AbVIC (70 aa).

Positions 1 to 17 (VLIIAVLFLTACQLTTA) are cleaved as a signal peptide. Positions 18–41 (ETSSRGKQKHRALRSTDKNSKLTR) are excised as a propeptide. Residues 19-41 (TSSRGKQKHRALRSTDKNSKLTR) form a disordered region. Disulfide bonds link Cys-43–Cys-57, Cys-50–Cys-61, and Cys-56–Cys-68.

It belongs to the conotoxin O1 superfamily. In terms of tissue distribution, expressed by the venom duct.

Its subcellular location is the secreted. In Conus abbreviatus (Abbreviated cone), this protein is Conotoxin AbVIC.